The primary structure comprises 100 residues: Small ribosomal subunit protein uS14c (100 aa).

Belongs to the universal ribosomal protein uS14 family. In terms of assembly, part of the 30S ribosomal subunit.

Its subcellular location is the plastid. The protein localises to the chloroplast. Its function is as follows. Binds 16S rRNA, required for the assembly of 30S particles. The polypeptide is Small ribosomal subunit protein uS14c (Olimarabidopsis pumila (Dwarf rocket)).